The chain runs to 229 residues: Glycerol-3-phosphate acyltransferase (229 aa).

The next 6 membrane-spanning stretches (helical) occupy residues W2–W22, L56–I76, F93–F113, L129–L149, S151–L171, and A178–A198.

This sequence belongs to the PlsY family. Probably interacts with PlsX.

The protein localises to the cell inner membrane. The catalysed reaction is an acyl phosphate + sn-glycerol 3-phosphate = a 1-acyl-sn-glycero-3-phosphate + phosphate. The protein operates within lipid metabolism; phospholipid metabolism. Functionally, catalyzes the transfer of an acyl group from acyl-phosphate (acyl-PO(4)) to glycerol-3-phosphate (G3P) to form lysophosphatidic acid (LPA). This enzyme utilizes acyl-phosphate as fatty acyl donor, but not acyl-CoA or acyl-ACP. This is Glycerol-3-phosphate acyltransferase from Salinibacter ruber (strain DSM 13855 / M31).